The sequence spans 181 residues: Oligoribonuclease (181 aa).

An Exonuclease domain is found at 8–171 (LIWIDLEMTG…DDIRESVAEL (164 aa)). Y129 is a catalytic residue.

The protein belongs to the oligoribonuclease family.

The protein resides in the cytoplasm. Functionally, 3'-to-5' exoribonuclease specific for small oligoribonucleotides. The polypeptide is Oligoribonuclease (Sodalis glossinidius (strain morsitans)).